The primary structure comprises 430 residues: UDP-N-acetylglucosamine 1-carboxyvinyltransferase (430 aa).

22–23 lines the phosphoenolpyruvate pocket; the sequence is KN. Arg102 is a binding site for UDP-N-acetyl-alpha-D-glucosamine. The Proton donor role is filled by Cys126. Cys126 carries the post-translational modification 2-(S-cysteinyl)pyruvic acid O-phosphothioketal. Residues 131–135, 172–175, Asp317, and Ile339 contribute to the UDP-N-acetyl-alpha-D-glucosamine site; these read RPVDL and KVSV.

Belongs to the EPSP synthase family. MurA subfamily.

The protein localises to the cytoplasm. The catalysed reaction is phosphoenolpyruvate + UDP-N-acetyl-alpha-D-glucosamine = UDP-N-acetyl-3-O-(1-carboxyvinyl)-alpha-D-glucosamine + phosphate. The protein operates within cell wall biogenesis; peptidoglycan biosynthesis. In terms of biological role, cell wall formation. Adds enolpyruvyl to UDP-N-acetylglucosamine. The sequence is that of UDP-N-acetylglucosamine 1-carboxyvinyltransferase from Sinorhizobium medicae (strain WSM419) (Ensifer medicae).